The primary structure comprises 154 residues: MKTFTATPADIEKKWILIDAEGVVLGRLATIVANILRGKNKPTFTPHMDMGDNVIIINADKVQMTGNKRADKRYYWHTGHPGGIKFRTAAQVLDGAHPERVVIKAVERMISRNSLGRQQMTNLRVYAGAEHPHEAQQPTVLDVASLNPKNTRSA.

This sequence belongs to the universal ribosomal protein uL13 family. As to quaternary structure, part of the 50S ribosomal subunit.

Functionally, this protein is one of the early assembly proteins of the 50S ribosomal subunit, although it is not seen to bind rRNA by itself. It is important during the early stages of 50S assembly. The protein is Large ribosomal subunit protein uL13 of Cereibacter sphaeroides (strain ATCC 17025 / ATH 2.4.3) (Rhodobacter sphaeroides).